A 322-amino-acid chain; its full sequence is 4-hydroxy-3-methylbut-2-enyl diphosphate reductase (322 aa).

Residue Cys-15 participates in [4Fe-4S] cluster binding. Positions 44 and 77 each coordinate (2E)-4-hydroxy-3-methylbut-2-enyl diphosphate. Dimethylallyl diphosphate is bound by residues His-44 and His-77. Residues His-44 and His-77 each contribute to the isopentenyl diphosphate site. Cys-99 contributes to the [4Fe-4S] cluster binding site. His-127 contacts (2E)-4-hydroxy-3-methylbut-2-enyl diphosphate. His-127 contributes to the dimethylallyl diphosphate binding site. Isopentenyl diphosphate is bound at residue His-127. Residue Glu-129 is the Proton donor of the active site. Thr-168 lines the (2E)-4-hydroxy-3-methylbut-2-enyl diphosphate pocket. Cys-198 provides a ligand contact to [4Fe-4S] cluster. Residues Ser-226, Ser-227, Asn-228, and Ser-270 each contribute to the (2E)-4-hydroxy-3-methylbut-2-enyl diphosphate site. 4 residues coordinate dimethylallyl diphosphate: Ser-226, Ser-227, Asn-228, and Ser-270. Isopentenyl diphosphate contacts are provided by Ser-226, Ser-227, Asn-228, and Ser-270.

This sequence belongs to the IspH family. It depends on [4Fe-4S] cluster as a cofactor.

The enzyme catalyses isopentenyl diphosphate + 2 oxidized [2Fe-2S]-[ferredoxin] + H2O = (2E)-4-hydroxy-3-methylbut-2-enyl diphosphate + 2 reduced [2Fe-2S]-[ferredoxin] + 2 H(+). It carries out the reaction dimethylallyl diphosphate + 2 oxidized [2Fe-2S]-[ferredoxin] + H2O = (2E)-4-hydroxy-3-methylbut-2-enyl diphosphate + 2 reduced [2Fe-2S]-[ferredoxin] + 2 H(+). It participates in isoprenoid biosynthesis; dimethylallyl diphosphate biosynthesis; dimethylallyl diphosphate from (2E)-4-hydroxy-3-methylbutenyl diphosphate: step 1/1. It functions in the pathway isoprenoid biosynthesis; isopentenyl diphosphate biosynthesis via DXP pathway; isopentenyl diphosphate from 1-deoxy-D-xylulose 5-phosphate: step 6/6. Catalyzes the conversion of 1-hydroxy-2-methyl-2-(E)-butenyl 4-diphosphate (HMBPP) into a mixture of isopentenyl diphosphate (IPP) and dimethylallyl diphosphate (DMAPP). Acts in the terminal step of the DOXP/MEP pathway for isoprenoid precursor biosynthesis. This is 4-hydroxy-3-methylbut-2-enyl diphosphate reductase from Neisseria meningitidis serogroup C (strain 053442).